The sequence spans 117 residues: Cell division protein FtsB (117 aa).

Over Met-1 to Trp-6 the chain is Cytoplasmic. The helical transmembrane segment at Met-7 to Phe-24 threads the bilayer. Over Gly-25 to Pro-117 the chain is Periplasmic. Positions Ser-29–Ala-69 form a coiled coil.

This sequence belongs to the FtsB family. Part of a complex composed of FtsB, FtsL and FtsQ.

It localises to the cell inner membrane. In terms of biological role, essential cell division protein. May link together the upstream cell division proteins, which are predominantly cytoplasmic, with the downstream cell division proteins, which are predominantly periplasmic. This chain is Cell division protein FtsB, found in Stenotrophomonas maltophilia (strain R551-3).